The following is a 428-amino-acid chain: Serine--tRNA ligase (428 aa).

235 to 237 lines the L-serine pocket; sequence TAE. 266-268 provides a ligand contact to ATP; sequence RSE. Glu-289 is an L-serine binding site. An ATP-binding site is contributed by 353–356; it reads EISS. Position 389 (Ser-389) interacts with L-serine.

This sequence belongs to the class-II aminoacyl-tRNA synthetase family. Type-1 seryl-tRNA synthetase subfamily. As to quaternary structure, homodimer. The tRNA molecule binds across the dimer.

The protein localises to the cytoplasm. It catalyses the reaction tRNA(Ser) + L-serine + ATP = L-seryl-tRNA(Ser) + AMP + diphosphate + H(+). The catalysed reaction is tRNA(Sec) + L-serine + ATP = L-seryl-tRNA(Sec) + AMP + diphosphate + H(+). Its pathway is aminoacyl-tRNA biosynthesis; selenocysteinyl-tRNA(Sec) biosynthesis; L-seryl-tRNA(Sec) from L-serine and tRNA(Sec): step 1/1. In terms of biological role, catalyzes the attachment of serine to tRNA(Ser). Is also able to aminoacylate tRNA(Sec) with serine, to form the misacylated tRNA L-seryl-tRNA(Sec), which will be further converted into selenocysteinyl-tRNA(Sec). This chain is Serine--tRNA ligase, found in Shewanella baltica (strain OS185).